A 108-amino-acid chain; its full sequence is ATP-dependent Clp protease adapter protein ClpS (108 aa).

Belongs to the ClpS family. Binds to the N-terminal domain of the chaperone ClpA.

Functionally, involved in the modulation of the specificity of the ClpAP-mediated ATP-dependent protein degradation. This chain is ATP-dependent Clp protease adapter protein ClpS, found in Cupriavidus metallidurans (strain ATCC 43123 / DSM 2839 / NBRC 102507 / CH34) (Ralstonia metallidurans).